A 203-amino-acid chain; its full sequence is Secreted phosphoprotein 24 (203 aa).

A signal peptide spans Met1–Gly23. 2 disulfide bridges follow: Cys86–Cys96 and Cys109–Cys127. At Ser90 the chain carries Phosphoserine. Phosphoserine is present on residues Ser137, Ser138, Ser162, Ser165, and Ser174.

This sequence belongs to the SPP2 family. Phosphorylation sites are present in the extracellular medium.

The protein resides in the secreted. Functionally, could coordinate an aspect of bone turnover. In Mus musculus (Mouse), this protein is Secreted phosphoprotein 24 (Spp2).